Reading from the N-terminus, the 539-residue chain is Transcription factor prr1 (539 aa).

Residues 7-111 mediate DNA binding; the sequence is SSDFVRKLFN…LLDNIKRKAP (105 aa). Position 221 is a phosphothreonine (T221). A Phosphoserine modification is found at S223. Polar residues predominate over residues 251 to 263; that stretch reads GTAQPSLYNTPSS. The segment at 251 to 281 is disordered; that stretch reads GTAQPSLYNTPSSDYELANQEKPADSMASAA. In terms of domain architecture, Response regulatory spans 369-483; that stretch reads RILLVEDDEL…TLLQLLKKQL (115 aa). Residue D418 is modified to 4-aspartylphosphate.

This sequence in the N-terminal section; belongs to the HSF family.

It is found in the nucleus. In terms of biological role, involved in oxidative stress. Transcription factor that acts upon trr1 and ctt1. The sequence is that of Transcription factor prr1 (prr1) from Schizosaccharomyces pombe (strain 972 / ATCC 24843) (Fission yeast).